The sequence spans 194 residues: Imidazoleglycerol-phosphate dehydratase (194 aa).

This sequence belongs to the imidazoleglycerol-phosphate dehydratase family.

It is found in the cytoplasm. It carries out the reaction D-erythro-1-(imidazol-4-yl)glycerol 3-phosphate = 3-(imidazol-4-yl)-2-oxopropyl phosphate + H2O. The protein operates within amino-acid biosynthesis; L-histidine biosynthesis; L-histidine from 5-phospho-alpha-D-ribose 1-diphosphate: step 6/9. The sequence is that of Imidazoleglycerol-phosphate dehydratase from Streptococcus mutans serotype c (strain ATCC 700610 / UA159).